The chain runs to 341 residues: Uroporphyrinogen decarboxylase (341 aa).

Substrate-binding positions include 25–29 (RQAGR), Phe44, Asp74, Tyr151, Ser206, and His318.

It belongs to the uroporphyrinogen decarboxylase family. Homodimer.

The protein resides in the cytoplasm. It catalyses the reaction uroporphyrinogen III + 4 H(+) = coproporphyrinogen III + 4 CO2. It participates in porphyrin-containing compound metabolism; protoporphyrin-IX biosynthesis; coproporphyrinogen-III from 5-aminolevulinate: step 4/4. In terms of biological role, catalyzes the decarboxylation of four acetate groups of uroporphyrinogen-III to yield coproporphyrinogen-III. The protein is Uroporphyrinogen decarboxylase of Christiangramia forsetii (strain DSM 17595 / CGMCC 1.15422 / KT0803) (Gramella forsetii).